The following is a 107-amino-acid chain: Small ribosomal subunit protein uS17 (107 aa).

Belongs to the universal ribosomal protein uS17 family. In terms of assembly, part of the 30S ribosomal subunit.

One of the primary rRNA binding proteins, it binds specifically to the 5'-end of 16S ribosomal RNA. This chain is Small ribosomal subunit protein uS17, found in Thermotoga maritima (strain ATCC 43589 / DSM 3109 / JCM 10099 / NBRC 100826 / MSB8).